The primary structure comprises 176 residues: DNA-directed RNA polymerase II subunit 7 (176 aa).

Belongs to the eukaryotic RPB7/RPC8 RNA polymerase subunit family. In terms of assembly, component of the RNA polymerase II complex consisting of at least 12 subunits. Interacts with NRPB4.

The protein localises to the nucleus. In terms of biological role, DNA-dependent RNA polymerase catalyzes the transcription of DNA into RNA using the four ribonucleoside triphosphates as substrates. Component of RNA polymerase II which synthesizes mRNA precursors and many functional non-coding RNAs. Pol II is the central component of the basal RNA polymerase II transcription machinery. It is composed of mobile elements that move relative to each other. NRPB7 is part of a subcomplex with NRPB4 that binds to a pocket formed by NRPB1, NRPB2 and NRPB6 at the base of the clamp element. The NRBP4-NRPB7 subcomplex seems to lock the clamp via NRPB7 in the closed conformation thus preventing double-stranded DNA to enter the active site cleft. The NRPB4-NRPB7 subcomplex binds single-stranded DNA and RNA. The polypeptide is DNA-directed RNA polymerase II subunit 7 (NRPB7) (Arabidopsis thaliana (Mouse-ear cress)).